Consider the following 142-residue polypeptide: Coactosin-like protein (142 aa).

An N-acetylalanine modification is found at alanine 2. An ADF-H domain is found at 2 to 130; sequence ATKIDKEACR…EEDFIRSELK (129 aa). Serine 23 is subject to Phosphoserine. Positions 66-75 are flexible and important for F-actin binding; that stretch reads TGDAMSKRSK. Lysine 102 carries the post-translational modification N6-acetyllysine. Serine 141 carries the post-translational modification Phosphoserine.

It belongs to the actin-binding proteins ADF family. Coactosin subfamily. Interacts with 5-lipoxygenase (ALOX5/5LO) in a calcium-independent manner. Binds to F-actin with a stoichiometry of 1:2.

The protein resides in the cytoplasm. Its subcellular location is the cytoskeleton. It localises to the nucleus. Binds to F-actin in a calcium-independent manner. Has no direct effect on actin depolymerization. Acts as a chaperone for ALOX5 (5LO), influencing both its stability and activity in leukotrienes synthesis. The sequence is that of Coactosin-like protein from Rattus norvegicus (Rat).